Consider the following 729-residue polypeptide: Fatty acid oxidation complex subunit alpha (729 aa).

The segment at 1–189 (MLYKGDTLYL…KIGLVDGVVK (189 aa)) is enoyl-CoA hydratase/isomerase. Residue D296 participates in substrate binding. The 3-hydroxyacyl-CoA dehydrogenase stretch occupies residues 311–729 (ETPKQAAVLG…ARPVGDLKTA (419 aa)). NAD(+) is bound by residues M324, D343, 400–402 (VVE), K407, and S429. H450 functions as the For 3-hydroxyacyl-CoA dehydrogenase activity in the catalytic mechanism. N453 is a binding site for NAD(+). Substrate is bound by residues N500 and Y660. The segment at 708–729 (RHNEPYYPPVEPARPVGDLKTA) is disordered.

This sequence in the N-terminal section; belongs to the enoyl-CoA hydratase/isomerase family. It in the C-terminal section; belongs to the 3-hydroxyacyl-CoA dehydrogenase family. Heterotetramer of two alpha chains (FadB) and two beta chains (FadA).

It carries out the reaction a (3S)-3-hydroxyacyl-CoA + NAD(+) = a 3-oxoacyl-CoA + NADH + H(+). The catalysed reaction is a (3S)-3-hydroxyacyl-CoA = a (2E)-enoyl-CoA + H2O. It catalyses the reaction a 4-saturated-(3S)-3-hydroxyacyl-CoA = a (3E)-enoyl-CoA + H2O. The enzyme catalyses (3S)-3-hydroxybutanoyl-CoA = (3R)-3-hydroxybutanoyl-CoA. It carries out the reaction a (3Z)-enoyl-CoA = a 4-saturated (2E)-enoyl-CoA. The catalysed reaction is a (3E)-enoyl-CoA = a 4-saturated (2E)-enoyl-CoA. The protein operates within lipid metabolism; fatty acid beta-oxidation. Its function is as follows. Involved in the aerobic and anaerobic degradation of long-chain fatty acids via beta-oxidation cycle. Catalyzes the formation of 3-oxoacyl-CoA from enoyl-CoA via L-3-hydroxyacyl-CoA. It can also use D-3-hydroxyacyl-CoA and cis-3-enoyl-CoA as substrate. The chain is Fatty acid oxidation complex subunit alpha from Escherichia coli (strain K12 / MC4100 / BW2952).